We begin with the raw amino-acid sequence, 607 residues long: Homologous recombination OB-fold protein (607 aa).

4 disordered regions span residues 25–49 (LRPN…SYPA), 84–108 (ISSS…SGRQ), 196–308 (PWPS…TTVT), and 531–581 (LKPP…DDLD). Polar residues-rich tracts occupy residues 27-49 (PNSS…SYPA) and 92-108 (QQRM…SGRQ). Position 30 is a phosphoserine (Ser30). An Asymmetric dimethylarginine modification is found at Arg281. The span at 295 to 308 (SPFSTPRSTSTTVT) shows a compositional bias: low complexity. Positions 570–581 (PEEELPEADDLD) are enriched in acidic residues.

As to quaternary structure, interacts with MCM8; this interaction is necessary for MCM8-MCM9 helicase complex recruitment to DNA damage sites. Interacts with RPA1; this interaction associates HROB with the RPA complex.

The protein localises to the nucleus. The protein resides in the chromosome. DNA-binding protein involved in homologous recombination that acts by recruiting the MCM8-MCM9 helicase complex to sites of DNA damage to promote DNA repair synthesis. In Rattus norvegicus (Rat), this protein is Homologous recombination OB-fold protein.